The chain runs to 216 residues: Cytochrome c-type protein Cgr1 (216 aa).

The helical transmembrane segment at 18 to 38 (WPIVVGVVVVVLIAAGAGFWV) threads the bilayer. Heme is bound by residues Cys-46, Cys-50, His-51, Cys-95, Cys-98, His-99, Cys-142, Cys-147, His-148, Cys-176, Cys-179, His-180, Cys-190, Cys-193, and His-194.

This sequence belongs to the multiheme cytochrome c family. As to quaternary structure, may form a membrane-associated complex with Cgr2. Binds 5 heme groups per subunit.

It is found in the cell membrane. Functionally, probably transfers electrons from a membrane-associated electron donor (e.g. the membrane quinone pool) to the [4Fe-4S] cluster of the Cgr2 reductase via its covalently bound heme groups. The protein is Cytochrome c-type protein Cgr1 of Eggerthella lenta (strain ATCC 25559 / DSM 2243 / CCUG 17323 / JCM 9979 / KCTC 3265 / NCTC 11813 / VPI 0255 / 1899 B) (Eubacterium lentum).